An 89-amino-acid polypeptide reads, in one-letter code: MTEVLFKYHGNLTGRAHFPTLATEADTTSDKYSNLYMYVGLFLSLLAILLILLFTMLLRLKHVISPITESTESVPQFTDVEMQSRIPTP.

N-linked (GlcNAc...) asparagine glycosylation occurs at asparagine 11. Residues 38 to 58 (YVGLFLSLLAILLILLFTMLL) form a helical membrane-spanning segment.

The protein resides in the membrane. The sequence is that of Serine-rich and transmembrane domain-containing 2 from Mus musculus (Mouse).